The primary structure comprises 97 residues: Co-chaperonin GroES (97 aa).

The protein belongs to the GroES chaperonin family. In terms of assembly, heptamer of 7 subunits arranged in a ring. Interacts with the chaperonin GroEL.

It localises to the cytoplasm. In terms of biological role, together with the chaperonin GroEL, plays an essential role in assisting protein folding. The GroEL-GroES system forms a nano-cage that allows encapsulation of the non-native substrate proteins and provides a physical environment optimized to promote and accelerate protein folding. GroES binds to the apical surface of the GroEL ring, thereby capping the opening of the GroEL channel. This is Co-chaperonin GroES from Oleispira antarctica.